A 182-amino-acid chain; its full sequence is 5-formyltetrahydrofolate cyclo-ligase (182 aa).

Residues 1 to 21 form a disordered region; that stretch reads MIRQRRRALTPEQQQEMGQQA. The segment covering 11-21 has biased composition (polar residues); that stretch reads PEQQQEMGQQA. Residues 128–135 and aspartate 167 each bind ATP; that span reads GMGGGFYD.

The protein belongs to the 5-formyltetrahydrofolate cyclo-ligase family.

The catalysed reaction is (6S)-5-formyl-5,6,7,8-tetrahydrofolate + ATP = (6R)-5,10-methenyltetrahydrofolate + ADP + phosphate. The protein operates within one-carbon metabolism; tetrahydrofolate interconversion. Its function is as follows. Involved in the removal of 5-formyltetrahydrofolate. In vitro, it is a potent inhibitor of various folate-dependent enzymes in the C1 metabolism network and in vivo it might function as a folate storage. 5-formyltetrahydrofolate is also used as an antifolate rescue agent in cancer chemotherapy. Catalyzes the irreversible ATP-dependent transformation of 5-formyltetrahydrofolate (5-CHO-THF) to form 5,10-methenyltetrahydrofolate (5,10-CH=THF). The reverse reaction is catalyzed by the serine hydroxymethyltransferase GlyA (SHMT). In Escherichia coli O157:H7, this protein is 5-formyltetrahydrofolate cyclo-ligase (ygfA).